The chain runs to 474 residues: MKITHTAIEFAPVIKAGGLGDALYGLAKALAVNHTTEVVIPLYPKLFTSLHEQDLFATQKIPYFFAGEQEATAFSYFYEGIKVTLLKLDSQPELFEEAETIYTNDDAFRFCAFSAAAAAYIQKEGADIVHLHDWHVGLVAGLLKQQPCPQLQKIVLTLHNFGYRGYTTREVLEASSLNEFYLSHYQLFRDPQTCVLLKGALYCSDFVTTVSPTYAKEILQDYSDYEIHDAITARQHHLKGILNGIDYTILDPETDPHLAKNYSKVLFEDPKAFFEAKAENKKALYETLGLSLDKSPCMCIISRIAEQKGPEFMKQAILHALENAYTLIIIGTCYGGQIHKEFSNLQESLADSPNVRILLTYSDVLARQIFAAADMICIPSMFEPCGLTQMIGMRYGTVPVVRATGGLADTVTDGVNGFSFSNPHDFHEFRNMLSKAIATYRDDQDKWQQIVRSCLEFSSDLETAANKYLEIYQQ.

ADP-alpha-D-glucose is bound at residue Lys-15.

Belongs to the glycosyltransferase 1 family. Bacterial/plant glycogen synthase subfamily.

The catalysed reaction is [(1-&gt;4)-alpha-D-glucosyl](n) + ADP-alpha-D-glucose = [(1-&gt;4)-alpha-D-glucosyl](n+1) + ADP + H(+). Its pathway is glycan biosynthesis; glycogen biosynthesis. Its function is as follows. Synthesizes alpha-1,4-glucan chains using ADP-glucose. The sequence is that of Glycogen synthase from Chlamydia muridarum (strain MoPn / Nigg).